A 39-amino-acid chain; its full sequence is Photosystem II reaction center protein J (39 aa).

A helical transmembrane segment spans residues 7-27 (IPLWLVATVAGMGVITLLGIF).

The protein belongs to the PsbJ family. As to quaternary structure, PSII is composed of 1 copy each of membrane proteins PsbA, PsbB, PsbC, PsbD, PsbE, PsbF, PsbH, PsbI, PsbJ, PsbK, PsbL, PsbM, PsbT, PsbX, PsbY, PsbZ, Psb30/Ycf12, peripheral proteins PsbO, CyanoQ (PsbQ), PsbU, PsbV and a large number of cofactors. It forms dimeric complexes.

It is found in the cellular thylakoid membrane. Its function is as follows. One of the components of the core complex of photosystem II (PSII). PSII is a light-driven water:plastoquinone oxidoreductase that uses light energy to abstract electrons from H(2)O, generating O(2) and a proton gradient subsequently used for ATP formation. It consists of a core antenna complex that captures photons, and an electron transfer chain that converts photonic excitation into a charge separation. The protein is Photosystem II reaction center protein J of Cyanothece sp. (strain PCC 7425 / ATCC 29141).